The sequence spans 316 residues: Probable cell division protein WhiA (316 aa).

A DNA-binding region (H-T-H motif) is located at residues 275–309 (TLKELGEMVSGGKISKSGINHRLRKIDEIAEKLRA).

The protein belongs to the WhiA family.

Functionally, involved in cell division and chromosome segregation. This Bacillus mycoides (strain KBAB4) (Bacillus weihenstephanensis) protein is Probable cell division protein WhiA.